The sequence spans 686 residues: Putative pentatricopeptide repeat-containing protein At3g49142 (686 aa).

PPR repeat units follow at residues 73-103 (NSSL…IPER), 104-138 (NVII…NVRP), 139-173 (DHYT…GLSS), 174-204 (TLFV…MSRR), 205-239 (DVVS…KISH), 240-272 (DAGT…MGKK), 273-307 (SLVS…GFEP), 308-342 (DAVS…KLIP), 343-373 (NLLL…MKSR), 374-408 (DVVS…GLVP), 409-439 (DSIA…MTDH), and 445-475 (RLEH…MSME). Positions 480–555 (VWGALLGACR…NPGASNVEVN (76 aa)) are type E motif. Residues 556–586 (RIIHTFLVGDRSHPQSDEIYRELDVLVKKMK) form a type E(+) motif region. Residues 587–686 (ELGYVPDSES…FGVCSCGDYW (100 aa)) form a type DYW motif region.

The protein belongs to the PPR family. PCMP-H subfamily.

This is Putative pentatricopeptide repeat-containing protein At3g49142 (PCMP-H77) from Arabidopsis thaliana (Mouse-ear cress).